We begin with the raw amino-acid sequence, 408 residues long: MEQLFREAQDALAAAGPLCQESQDVLARARQNLEVAVHLGIRTQFLAKAHAHQWTLASKFYSNALTRTKKSLETVTRQQTRFQAARGALEEALGELAATPVQLRVNNGAHNLREFVDEDLISAQVQGKGWNEVHEEALNVFRVLLPEIQRHGDIVNRSKKEFEREKAEQTELLIHQTSDSGIYDLLNSAEACSEDMANLLQSLARHYDLCERGQDLSTGAIEAEDVNELGELRAVLENDAQQLPDVLDELQERLDEVKQGCQGVHNHMTQMYHSYSLEVRQLEGIQAVEKTMDATLEICETQQRDTKEYLLKVQRYVSETSAVVTHYQTFLNSYKALLHEAERRNAAEAKMKDYVTEVNAKLAQMSIQETNRRQDFVAQQGDYLPADIWDELLLPSRRFEARELDGEL.

It belongs to the ATG17 family.

The protein localises to the cytoplasm. It is found in the preautophagosomal structure membrane. In terms of biological role, autophagy-specific protein that functions in response to autophagy-inducing signals as a scaffold to recruit other ATG proteins to organize pre-autophagosomal structure (PAS) formation. Modulates the timing and magnitude of the autophagy response, such as the size of the sequestering vesicles. Plays particularly a role in pexophagy and nucleophagy. This chain is Autophagy-related protein 17 (ATG17), found in Yarrowia lipolytica (strain CLIB 122 / E 150) (Yeast).